Reading from the N-terminus, the 209-residue chain is Uracil phosphoribosyltransferase (209 aa).

5-phospho-alpha-D-ribose 1-diphosphate-binding positions include Arg-79, Arg-104, and 131–139; that span reads DPMLATANS. Residues Ile-194 and 199–201 each bind uracil; that span reads GDA. Asp-200 is a 5-phospho-alpha-D-ribose 1-diphosphate binding site.

It belongs to the UPRTase family. The cofactor is Mg(2+).

It catalyses the reaction UMP + diphosphate = 5-phospho-alpha-D-ribose 1-diphosphate + uracil. The protein operates within pyrimidine metabolism; UMP biosynthesis via salvage pathway; UMP from uracil: step 1/1. With respect to regulation, allosterically activated by GTP. In terms of biological role, catalyzes the conversion of uracil and 5-phospho-alpha-D-ribose 1-diphosphate (PRPP) to UMP and diphosphate. This Mesorhizobium japonicum (strain LMG 29417 / CECT 9101 / MAFF 303099) (Mesorhizobium loti (strain MAFF 303099)) protein is Uracil phosphoribosyltransferase.